A 311-amino-acid chain; its full sequence is Natural killer cell receptor 2B4 (311 aa).

The N-terminal stretch at 1–19 is a signal peptide; it reads MLQQTVLLSLFLLLRAHQG. The Extracellular segment spans residues 20-223; that stretch reads QDCADSSEEV…CQSVPSKFNY (204 aa). A disulfide bridge links Cys-22 with Cys-118. 2 consecutive Ig-like domains span residues 22–128 and 131–215; these read CADS…LIFD and ETPH…QSCQ. Residues Asn-101, Asn-144, Asn-160, Asn-183, Asn-196, and Asn-205 are each glycosylated (N-linked (GlcNAc...) asparagine). A disulfide bridge links Cys-153 with Cys-195. The chain crosses the membrane as a helical span at residues 224–247; it reads LPFMVSIGILVKFFHGAIDCFCVW. At 248–311 the chain is on the cytoplasmic side; it reads NRKRKQSQSI…RRLFQFINRS (64 aa). Residues 275–301 are disordered; sequence RDQRGHFRASGSSSDVRGDERGQRESD. Basic and acidic residues predominate over residues 290-301; that stretch reads VRGDERGQRESD.

As to quaternary structure, interacts with CD48. Interacts (via phosphorylated ITSM 1-4) with SH2D1A (via SH2 domain); SH2D1A probably mediates association with FYN. Interacts (via phosphorylated ITSM 3) with PTPN11/SHP-2, INPP5D/SHIP1, PTPN6/SHP-1 and CSK; binding of SH2D1A/SAP prevents association with PTPN11, PTPN6 and CSK; conflictingly a similar association has been described for phosphorylated ITSM 1 also including GRB2 and PLCG1. Interacts weakly (via phosphorylated ITSM 2) with PTPN11/SHP-2 and CSK. Interacts with SH2D1B. Interacts with PIK3R1; PI3K recruits SH2D1A. Interacts with MHC class I proteins; the interaction is proposed to prevent self-killing of NK cells. Post-translationally, N-linked glycosylation is essential for the binding to its ligand CD48. Also O-glycosylated, in contrast, O-linked sialylation has a negative impact on ligand binding. In terms of processing, phosphorylated by FYN and CSK on tyrosine residues following activation. Coligation with inhibitory receptors such as KIR2DL1 inhibits phosphorylation upon contact of NK cells with sensitive target cells.

The protein resides in the membrane. Its subcellular location is the cell membrane. The protein localises to the membrane raft. Its function is as follows. Heterophilic receptor of the signaling lymphocytic activation molecule (SLAM) family; its ligand is CD48. SLAM receptors triggered by homo- or heterotypic cell-cell interactions are modulating the activation and differentiation of a wide variety of immune cells and thus are involved in the regulation and interconnection of both innate and adaptive immune response. Activities are controlled by presence or absence of small cytoplasmic adapter proteins, SH2D1A/SAP and/or SH2D1B/EAT-2. Acts as activating natural killer (NK) cell receptor. Activating function implicates association with SH2D1A and FYN. Downstreaming signaling involves predominantly VAV1, and, to a lesser degree, INPP5D/SHIP1 and CBL. Signal attenuation in the absence of SH2D1A is proposed to be dependent on INPP5D and to a lesser extent PTPN6/SHP-1 and PTPN11/SHP-2. Stimulates NK cell cytotoxicity, production of IFN-gamma and granule exocytosis. Optimal expansion and activation of NK cells seems to be dependent on the engagement of CD244 with CD48 expressed on neighboring NK cells. Acts as costimulator in NK activation by enhancing signals by other NK receptors such as NCR3 and NCR1. At early stages of NK cell differentiation may function as an inhibitory receptor possibly ensuring the self-tolerance of developing NK cells. Involved in the regulation of CD8(+) T-cell proliferation; expression on activated T-cells and binding to CD48 provides costimulatory-like function for neighboring T-cells. Inhibits inflammatory responses in dendritic cells (DCs). The chain is Natural killer cell receptor 2B4 (Cd244) from Rattus norvegicus (Rat).